We begin with the raw amino-acid sequence, 94 residues long: Parvalbumin beta 4 (94 aa).

An N-acetylalanine modification is found at A1. 2 EF-hand domains span residues 36-63 (FFAIIDQDHSGFIEEEELKLFLQTFSAG) and 67-94 (LSDAETKTFLAAGDVDGDGMIGVDEFAA). The Ca(2+) site is built by D41, D43, S45, F47, E49, E52, D80, D82, D84, M86, and E91.

Belongs to the parvalbumin family.

In terms of biological role, in muscle, parvalbumin is thought to be involved in relaxation after contraction. It binds two calcium ions. The polypeptide is Parvalbumin beta 4 (Merluccius bilinearis (Silver hake)).